A 334-amino-acid chain; its full sequence is Anthranilate phosphoribosyltransferase (334 aa).

5-phospho-alpha-D-ribose 1-diphosphate contacts are provided by residues glycine 79, 82–83, serine 87, 89–92, 107–115, and serine 119; these read GD, NIST, and KAGNRSISS. Glycine 79 contributes to the anthranilate binding site. Mg(2+) is bound at residue serine 91. Anthranilate is bound at residue asparagine 110. Arginine 165 contacts anthranilate. Mg(2+)-binding residues include aspartate 224 and glutamate 225.

It belongs to the anthranilate phosphoribosyltransferase family. As to quaternary structure, homodimer. It depends on Mg(2+) as a cofactor.

It catalyses the reaction N-(5-phospho-beta-D-ribosyl)anthranilate + diphosphate = 5-phospho-alpha-D-ribose 1-diphosphate + anthranilate. Its pathway is amino-acid biosynthesis; L-tryptophan biosynthesis; L-tryptophan from chorismate: step 2/5. Catalyzes the transfer of the phosphoribosyl group of 5-phosphorylribose-1-pyrophosphate (PRPP) to anthranilate to yield N-(5'-phosphoribosyl)-anthranilate (PRA). The polypeptide is Anthranilate phosphoribosyltransferase (Streptococcus thermophilus (strain ATCC BAA-491 / LMD-9)).